Reading from the N-terminus, the 813-residue chain is Leucine--tRNA ligase (813 aa).

A 'HIGH' region motif is present at residues 41 to 51 (PYPSGTLHMGH). Residues 575-579 (KMSKS) carry the 'KMSKS' region motif. Lysine 578 contacts ATP.

This sequence belongs to the class-I aminoacyl-tRNA synthetase family.

It localises to the cytoplasm. It catalyses the reaction tRNA(Leu) + L-leucine + ATP = L-leucyl-tRNA(Leu) + AMP + diphosphate. This chain is Leucine--tRNA ligase, found in Francisella tularensis subsp. tularensis (strain WY96-3418).